The chain runs to 605 residues: Capsid scaffolding protein (605 aa).

Catalysis depends on charge relay system residues H48, S116, and H139. The tract at residues 235–274 is disordered; that stretch reads ASDAPDLQKPDKALQSPPPASTDPATMLSGNAGEGATACG. Residues 281-300 form an interaction with pAP region; it reads QDLISVPRNTFMTLLQTNLD. Disordered stretches follow at residues 403 to 431 and 489 to 588; these read DYVP…FPGE and PHQS…KSVS. The Nuclear localization signal motif lies at 410-416; it reads RSNKRKR. Polar residues predominate over residues 568 to 579; it reads ASASGVAQSKEP. Residues 585-605 form an interaction with major capsid protein region; it reads KSVSAHLKSIFCEELLNKRVA.

This sequence belongs to the herpesviridae capsid scaffolding protein family. Homomultimer. Interacts with major capsid protein. In terms of assembly, exists in a monomer-dimer equilibrium with the dimer being the active species. Capsid scaffolding protein is cleaved by assemblin after formation of the spherical procapsid. As a result, the capsid obtains its mature, icosahedral shape. Cleavages occur at two or more sites: release (R-site) and maturation (M-site).

The protein localises to the host cytoplasm. It localises to the host nucleus. It catalyses the reaction Cleaves -Ala-|-Ser- and -Ala-|-Ala- bonds in the scaffold protein.. Its function is as follows. Acts as a scaffold protein by binding major capsid protein in the cytoplasm, inducing the nuclear localization of both proteins. Multimerizes in the nucleus such as major capsid protein forms the icosahedral T=16 capsid. Autocatalytic cleavage releases the assembly protein, and subsequently abolishes interaction with major capsid protein. Cleavages products are evicted from the capsid before or during DNA packaging. In terms of biological role, protease that plays an essential role in virion assembly within the nucleus. Catalyzes the cleavage of the assembly protein after formation of the spherical procapsid. By that cleavage, the capsid matures and gains its icosahedral shape. The cleavage sites seem to include -Ala-Ser-, -Ala-Ala-, as well as Ala-Thr bonds. Assemblin and cleavages products are evicted from the capsid before or during DNA packaging. Functionally, plays a major role in capsid assembly. Acts as a scaffold protein by binding major capsid protein. Multimerizes in the nucleus such as major capsid protein forms the icosahedral T=16 capsid. Cleaved by assemblin after capsid completion. The cleavages products are evicted from the capsid before or during DNA packaging. The protein is Capsid scaffolding protein of Homo sapiens (Human).